The chain runs to 163 residues: MLGLIQAAKSLLLLEFMSAFFLAMRQFFSPKPTINYPYEKGVVSQRFRGEHALRRYPNGEERCIACKLCEAICPAQAITIEAGPRRNDGTRRTVRYDIDMVKCIYCGFCQEACPVEAIVEGPNFEFATETREELYYDKEKLLMNGDRWEREIARNILMDAPYR.

4Fe-4S ferredoxin-type domains lie at 53–83 and 94–123; these read LRRYPNGEERCIACKLCEAICPAQAITIEAG and VRYDIDMVKCIYCGFCQEACPVEAIVEGPN. Positions 63, 66, 69, 73, 103, 106, 109, and 113 each coordinate [4Fe-4S] cluster.

This sequence belongs to the complex I 23 kDa subunit family. As to quaternary structure, NDH-1 is composed of 14 different subunits. Subunits NuoA, H, J, K, L, M, N constitute the membrane sector of the complex. It depends on [4Fe-4S] cluster as a cofactor.

It localises to the cell inner membrane. It carries out the reaction a quinone + NADH + 5 H(+)(in) = a quinol + NAD(+) + 4 H(+)(out). NDH-1 shuttles electrons from NADH, via FMN and iron-sulfur (Fe-S) centers, to quinones in the respiratory chain. The immediate electron acceptor for the enzyme in this species is believed to be ubiquinone. Couples the redox reaction to proton translocation (for every two electrons transferred, four hydrogen ions are translocated across the cytoplasmic membrane), and thus conserves the redox energy in a proton gradient. The chain is NADH-quinone oxidoreductase subunit I from Bartonella henselae (strain ATCC 49882 / DSM 28221 / CCUG 30454 / Houston 1) (Rochalimaea henselae).